A 221-amino-acid polypeptide reads, in one-letter code: 5'-nucleotidase (221 aa).

Asp-14 (nucleophile) is an active-site residue.

It belongs to the HAD-like hydrolase superfamily. The cofactor is Mn(2+). Mg(2+) serves as cofactor.

The catalysed reaction is a ribonucleoside 5'-phosphate + H2O = a ribonucleoside + phosphate. Specifically dephosphorylates nucleoside 5'-monophosphates to nucleosides and inorganic phosphate. Displays high activity toward 5'-UMP and 5'-IMP, significant activity against 5'-XMP and 5'-TMP, and low activity against 5'-CMP. The sequence is that of 5'-nucleotidase from Pseudomonas aeruginosa (strain ATCC 15692 / DSM 22644 / CIP 104116 / JCM 14847 / LMG 12228 / 1C / PRS 101 / PAO1).